The sequence spans 1845 residues: Collagen alpha-1(XXVII) chain (1845 aa).

The N-terminal stretch at 1–39 (MGTGFARGARGTAASGPGGGFLFAWILVSFTCHLASTQG) is a signal peptide. A propeptide spans 40 to 609 (APEDVDVLQR…LGPTPFPMLM (570 aa)) (N-terminal propeptide). A Laminin G-like domain is found at 72 to 237 (PSGFIFTQRA…NYCAHLRERC (166 aa)). An N-linked (GlcNAc...) asparagine glycan is attached at asparagine 272. 4 disordered regions span residues 299–478 (TKPL…VPKT), 502–572 (PPLG…RPST), 608–774 (LMGP…MGRP), and 827–1608 (LMGG…HPIQ). Residues 312–323 (HSSSQTPLSPAK) show a composition bias toward polar residues. Low complexity-rich tracts occupy residues 327 to 343 (RKTPSPSSSASLANSTR) and 356 to 372 (TTTSPTKRSPTKPSVSP). The N-linked (GlcNAc...) asparagine glycan is linked to asparagine 340. A compositionally biased stretch (pro residues) spans 429–439 (PRPPVPSPQPL). Positions 444 to 454 (GLSKKFTNPTV) are enriched in polar residues. Basic and acidic residues predominate over residues 554 to 564 (SARDASPRDLT). 11 consecutive Collagen-like domains span residues 610 to 664 (GPPG…GDPG), 673 to 732 (GAKG…PGPV), 742 to 801 (GYIG…PGPP), 817 to 876 (GYPG…PGPL), 877 to 936 (GKAG…EGPM), 937 to 996 (GPPG…VGEK), 997 to 1038 (GDRG…PGSR), 1039 to 1096 (GLPG…GAKG), 1117 to 1176 (GSQG…PGLE), 1177 to 1236 (GDHG…QGEK), and 1240 to 1299 (GAKG…NGHK). The segment at 610–1603 (GPPGSKGDCG…RGRPGPPGPP (994 aa)) is triple-helical. The segment covering 639 to 654 (RGPPGPYGNPGPPGPP) has biased composition (pro residues). Low complexity-rich tracts occupy residues 677 to 690 (NMGLPGLSGNPGPL) and 699 to 719 (PGAAGHPGEQGQPGPEGSPGA). The span at 865–874 (GLPGGRGKPG) shows a compositional bias: gly residues. Residues 896–909 (FPGDIGPPGDNGPE) are compositionally biased toward low complexity. Residues 1018–1027 (GTPGGIGNPG) are compositionally biased toward gly residues. 3 stretches are compositionally biased toward low complexity: residues 1074 to 1086 (RGRPGQPGQQGAA), 1112 to 1122 (LPGEPGSQGPQ), and 1152 to 1167 (KGDLGPLGPPGEQGLI). Basic and acidic residues-rich tracts occupy residues 1187-1212 (LKGDRGDPGPDGEHGEKGQEGLKGED) and 1226-1238 (REGKPGKQGEKGQ). 2 stretches are compositionally biased toward basic and acidic residues: residues 1311-1323 (KGEKGDQGEDGKT) and 1335-1345 (PVGDRGDRGEP). The Collagen-like 12 domain occupies 1325–1384 (GPPGPPGDRGPVGDRGDRGEPGDPGYPGQEGVQGLRGEPGQQGQPGHPGPRGRPGPKGSK). Low complexity-rich tracts occupy residues 1360-1369 (RGEPGQQGQP), 1395-1422 (KAGPSGRRGTQGLQGLPGPRGVVGRQGP), and 1438-1465 (PGYQGDQGNDGDPGPVGPAGRRGNPGVA). 3 consecutive Collagen-like domains span residues 1424–1483 (GTAG…SGLP), 1484–1543 (GQLG…KGIQ), and 1544–1603 (GPRG…PGPP). Over residues 1557-1572 (IIGPPGMLGPSGLPGP) the composition is skewed to low complexity. Residues 1588–1605 (RGPPGPRGRPGPPGPPWH) are compositionally biased toward pro residues. Residues 1607–1845 (IQFQQDDLGA…RLEVGPACFL (239 aa)) constitute a propeptide, C-terminal propeptide. Residues 1645–1845 (GEIFKTLHYL…RLEVGPACFL (201 aa)) form the Fibrillar collagen NC1 domain. 3 disulfides stabilise this stretch: cysteine 1675/cysteine 1707, cysteine 1716/cysteine 1843, and cysteine 1752/cysteine 1796. Residues aspartate 1693, asparagine 1695, cysteine 1698, and aspartate 1701 each contribute to the Ca(2+) site. Residue asparagine 1754 is glycosylated (N-linked (GlcNAc...) asparagine).

The protein belongs to the fibrillar collagen family. In terms of tissue distribution, highly expressed in cartilage, eye and ear.

The protein resides in the secreted. The protein localises to the extracellular space. Its subcellular location is the extracellular matrix. Plays a role during the calcification of cartilage and the transition of cartilage to bone. The chain is Collagen alpha-1(XXVII) chain (Col27a1) from Mus musculus (Mouse).